We begin with the raw amino-acid sequence, 350 residues long: Bifunctional methylenetetrahydrofolate dehydrogenase/cyclohydrolase, mitochondrial (350 aa).

Residues 1-35 constitute a mitochondrion transit peptide; the sequence is MASVSLLSALAVRLLRPTHGCHPRLQPFHLAAVRN. Lys-50 bears the N6-acetyllysine; alternate mark. Residue Lys-50 forms a Glycyl lysine isopeptide (Lys-Gly) (interchain with G-Cter in SUMO2); alternate linkage. Substrate is bound by residues 84-88 and 131-133; these read YVLNK and VQL. NAD(+) is bound by residues 200 to 202 and Arg-233; that span reads GRS. 309–313 lines the substrate pocket; the sequence is PGGVG.

It belongs to the tetrahydrofolate dehydrogenase/cyclohydrolase family. As to quaternary structure, homodimer. The cofactor is Mg(2+).

It localises to the mitochondrion. It carries out the reaction (6R)-5,10-methylene-5,6,7,8-tetrahydrofolate + NAD(+) = (6R)-5,10-methenyltetrahydrofolate + NADH. The catalysed reaction is (6R)-5,10-methenyltetrahydrofolate + H2O = (6R)-10-formyltetrahydrofolate + H(+). Its function is as follows. Although its dehydrogenase activity is NAD-specific, it can also utilize NADP at a reduced efficiency. The sequence is that of Bifunctional methylenetetrahydrofolate dehydrogenase/cyclohydrolase, mitochondrial (Mthfd2) from Mus musculus (Mouse).